Reading from the N-terminus, the 297-residue chain is 4-hydroxy-tetrahydrodipicolinate synthase (297 aa).

T49 is a pyruvate binding site. Y137 acts as the Proton donor/acceptor in catalysis. K166 serves as the catalytic Schiff-base intermediate with substrate. Pyruvate is bound at residue I208.

Belongs to the DapA family. As to quaternary structure, homotetramer; dimer of dimers.

It localises to the cytoplasm. The enzyme catalyses L-aspartate 4-semialdehyde + pyruvate = (2S,4S)-4-hydroxy-2,3,4,5-tetrahydrodipicolinate + H2O + H(+). It participates in amino-acid biosynthesis; L-lysine biosynthesis via DAP pathway; (S)-tetrahydrodipicolinate from L-aspartate: step 3/4. In terms of biological role, catalyzes the condensation of (S)-aspartate-beta-semialdehyde [(S)-ASA] and pyruvate to 4-hydroxy-tetrahydrodipicolinate (HTPA). The polypeptide is 4-hydroxy-tetrahydrodipicolinate synthase (Parabacteroides distasonis (strain ATCC 8503 / DSM 20701 / CIP 104284 / JCM 5825 / NCTC 11152)).